A 365-amino-acid polypeptide reads, in one-letter code: Gibberellin 20 oxidase 1-A (365 aa).

A Fe2OG dioxygenase domain is found at 199–299 (GNDSIMRLNY…RKSLAFFLCP (101 aa)). 3 residues coordinate Fe cation: His224, Asp226, and His280. The active site involves Arg290.

This sequence belongs to the iron/ascorbate-dependent oxidoreductase family. GA20OX subfamily. Fe cation is required as a cofactor. Requires L-ascorbate as cofactor. Expressed in nodes and the ear of the elongating stem.

The enzyme catalyses gibberellin A12 + 2 2-oxoglutarate + 3 O2 + H(+) = gibberellin A9 + 2 succinate + 3 CO2 + 2 H2O. It carries out the reaction gibberellin A53 + 2 2-oxoglutarate + 3 O2 + H(+) = gibberellin A20 + 2 succinate + 3 CO2 + 2 H2O. Functionally, key oxidase enzyme in the biosynthesis of gibberellin that catalyzes the conversion of GA12 and GA53 to GA9 and GA20 respectively, via a three-step oxidation at C-20 of the GA skeleton. This is Gibberellin 20 oxidase 1-A (GA20ox1A) from Triticum aestivum (Wheat).